The chain runs to 311 residues: Malate dehydrogenase (311 aa).

NAD(+) is bound by residues 7-13 and Asp34; that span reads GAAGGIG. Residues Arg81 and Arg87 each contribute to the substrate site. Residues Asn94 and 117 to 119 contribute to the NAD(+) site; that span reads ITN. 2 residues coordinate substrate: Asn119 and Arg153. The active-site Proton acceptor is the His177. Met227 lines the NAD(+) pocket.

It belongs to the LDH/MDH superfamily. MDH type 1 family. Homodimer.

The enzyme catalyses (S)-malate + NAD(+) = oxaloacetate + NADH + H(+). Its function is as follows. Catalyzes the reversible oxidation of malate to oxaloacetate. The polypeptide is Malate dehydrogenase (Shewanella putrefaciens (strain CN-32 / ATCC BAA-453)).